A 194-amino-acid polypeptide reads, in one-letter code: Imidazoleglycerol-phosphate dehydratase (194 aa).

This sequence belongs to the imidazoleglycerol-phosphate dehydratase family.

It localises to the cytoplasm. It carries out the reaction D-erythro-1-(imidazol-4-yl)glycerol 3-phosphate = 3-(imidazol-4-yl)-2-oxopropyl phosphate + H2O. Its pathway is amino-acid biosynthesis; L-histidine biosynthesis; L-histidine from 5-phospho-alpha-D-ribose 1-diphosphate: step 6/9. The protein is Imidazoleglycerol-phosphate dehydratase of Streptococcus gordonii (strain Challis / ATCC 35105 / BCRC 15272 / CH1 / DL1 / V288).